A 198-amino-acid polypeptide reads, in one-letter code: Large ribosomal subunit protein bL25 (198 aa).

This sequence belongs to the bacterial ribosomal protein bL25 family. CTC subfamily. As to quaternary structure, part of the 50S ribosomal subunit; part of the 5S rRNA/L5/L18/L25 subcomplex. Contacts the 5S rRNA. Binds to the 5S rRNA independently of L5 and L18.

Functionally, this is one of the proteins that binds to the 5S RNA in the ribosome where it forms part of the central protuberance. The protein is Large ribosomal subunit protein bL25 of Azotobacter vinelandii (strain DJ / ATCC BAA-1303).